A 283-amino-acid chain; its full sequence is Protein FAM170B (283 aa).

A compositionally biased stretch (basic and acidic residues) spans 1–11 (MKCYFTDHRGE). Disordered regions lie at residues 1–58 (MKCY…REEG) and 246–283 (AQGQ…QEKQ).

This sequence belongs to the FAM170 family. Interacts with GOPC. Exclusively expressed in adult testis.

The protein resides in the cytoplasmic vesicle. It localises to the secretory vesicle. It is found in the acrosome. The protein localises to the acrosome outer membrane. Functionally, plays a role in fertilization through the acrosome reaction. The chain is Protein FAM170B from Homo sapiens (Human).